Here is an 816-residue protein sequence, read N- to C-terminus: Phosphatidylinositol 4-kinase beta (816 aa).

Residues 1 to 30 (MGDTVVEPTPLKPTSESTPGPAGSNGGSLL) form a disordered region. Gly2 is modified (N-acetylglycine). An interaction with ACBD3 region spans residues 2-68 (GDTVVEPTPL…VKLLHGGVAI (67 aa)). The region spanning 52–242 (CQEVLEKVKL…GTKLRKLILS (191 aa)) is the PIK helical domain. The disordered stretch occupies residues 248 to 318 (AHRKRELPSL…TESIDNSFSS (71 aa)). Residue Ser258 is modified to Phosphoserine. Thr263 is subject to Phosphothreonine. Phosphoserine occurs at positions 266, 275, 277, 284, and 294. 2 stretches are compositionally biased toward polar residues: residues 278–297 (DATA…SNPK) and 306–318 (SSST…SFSS). Phosphoserine is present on Ser428. Position 438 is a phosphothreonine (Thr438). Ser511 bears the Phosphoserine mark. Phosphothreonine is present on residues Thr517 and Thr519. Positions 535–801 (EPWQEKVRRI…MVDGSMRSIT (267 aa)) constitute a PI3K/PI4K catalytic domain. The tract at residues 541-547 (VRRIREG) is G-loop. A catalytic loop region spans residues 668–676 (QVKDRHNGN). Positions 687-711 (HIDFGFILSSSPRNLGFETSAFKLT) are activation loop.

This sequence belongs to the PI3/PI4-kinase family. Type III PI4K subfamily. As to quaternary structure, interacts with ARF1 and ARF3 in the Golgi complex, but not with ARF4, ARF5 or ARF6. Interacts with NCS1/FREQ in a calcium-independent manner. Interacts with CALN1/CABP8 and CALN2/CABP7; in a calcium-dependent manner; this interaction competes with NCS1/FREQ binding. Interacts with ACBD3. Interacts with ARMH3, YWHAB, YWHAE, YWHAG, YWHAH, YWHAQ, YWHAZ and SFN. Interacts with GGA2 (via VHS domain); the interaction is important for PI4KB location at the Golgi apparatus membrane. Interacts with ATG9A. Mg(2+) is required as a cofactor. Mn(2+) serves as cofactor.

Its subcellular location is the endomembrane system. The protein resides in the mitochondrion outer membrane. It localises to the rough endoplasmic reticulum membrane. It is found in the golgi apparatus. The protein localises to the golgi apparatus membrane. It carries out the reaction a 1,2-diacyl-sn-glycero-3-phospho-(1D-myo-inositol) + ATP = a 1,2-diacyl-sn-glycero-3-phospho-(1D-myo-inositol 4-phosphate) + ADP + H(+). With respect to regulation, inhibited by wortmannin. Increased kinase activity upon interaction with NCS1/FREQ. Phosphorylates phosphatidylinositol (PI) in the first committed step in the production of the second messenger inositol-1,4,5,-trisphosphate (PIP). May regulate Golgi disintegration/reorganization during mitosis, possibly via its phosphorylation. Involved in Golgi-to-plasma membrane trafficking. May play an important role in the inner ear development. This Otolemur garnettii (Small-eared galago) protein is Phosphatidylinositol 4-kinase beta (PI4KB).